The primary structure comprises 162 residues: NRR repressor homolog 3 (162 aa).

Residues 1 to 80 (MDPTMPTPHT…GHEEEARDED (80 aa)) form a disordered region. The span at 7-24 (TPHTISGTSPFPRNSSTA) shows a compositional bias: polar residues. Over residues 37–46 (PRHRRSRKRD) the composition is skewed to basic residues. Residues 69 to 80 (GHGHEEEARDED) are compositionally biased toward basic and acidic residues.

It belongs to the NPR1-interactor family. Interacts with NPR1/NH1. Interacts with NPR3/NH3.

It is found in the nucleus. In terms of biological role, binds to and represses NPR1/NH1-mediated transcriptional activation of LG2 in vitro. This is NRR repressor homolog 3 from Oryza sativa subsp. japonica (Rice).